Here is a 102-residue protein sequence, read N- to C-terminus: Small ribosomal subunit protein uS10 (102 aa).

Belongs to the universal ribosomal protein uS10 family. As to quaternary structure, part of the 30S ribosomal subunit.

Its function is as follows. Involved in the binding of tRNA to the ribosomes. This is Small ribosomal subunit protein uS10 from Coprothermobacter proteolyticus (strain ATCC 35245 / DSM 5265 / OCM 4 / BT).